We begin with the raw amino-acid sequence, 222 residues long: N-(5'-phosphoribosyl)anthranilate isomerase (222 aa).

This sequence belongs to the TrpF family.

The enzyme catalyses N-(5-phospho-beta-D-ribosyl)anthranilate = 1-(2-carboxyphenylamino)-1-deoxy-D-ribulose 5-phosphate. It functions in the pathway amino-acid biosynthesis; L-tryptophan biosynthesis; L-tryptophan from chorismate: step 3/5. The polypeptide is N-(5'-phosphoribosyl)anthranilate isomerase (Rhizobium johnstonii (strain DSM 114642 / LMG 32736 / 3841) (Rhizobium leguminosarum bv. viciae)).